Consider the following 358-residue polypeptide: MKQIQVDLGVRSYPIIFSQNLMSCGEHFARYLQDKNILIVTNETIAPLYLEKLQTVLSSFNCVAPVILPDGEQYKTLEQMDSIFTSLLQQNLGRDTVLIALGGGVVGDMTGFAAASYQRGIDFIQVPTTLLAQVDSSVGGKTAVNHPLGKNMIGAFYQPKMVMIDIDCLNTLPPREFSAGMAEVIKYGIIWDAEFFKWLEDNIEQLKSLDAQALTYAIGRCCEIKAEVVARDETEQGVRALLNLGHTFGHAIEAEMGYGVWLHGEAVAAGTVLAANTASGMDLIDESIVCRIIKLFEAFDLPVSPPNSMNFEDFIRHMRRDKKVLKGQLRLVLPEAIGQAGIYCEVSDELLETVIRCA.

NAD(+) contacts are provided by residues 70–75 (DGEQYK), 104–108 (GVVGD), 128–129 (TT), Lys141, Lys150, and 168–171 (CLNT). The Zn(2+) site is built by Glu183, His246, and His263.

The protein belongs to the sugar phosphate cyclases superfamily. Dehydroquinate synthase family. Co(2+) serves as cofactor. It depends on Zn(2+) as a cofactor. Requires NAD(+) as cofactor.

The protein resides in the cytoplasm. It carries out the reaction 7-phospho-2-dehydro-3-deoxy-D-arabino-heptonate = 3-dehydroquinate + phosphate. Its pathway is metabolic intermediate biosynthesis; chorismate biosynthesis; chorismate from D-erythrose 4-phosphate and phosphoenolpyruvate: step 2/7. In terms of biological role, catalyzes the conversion of 3-deoxy-D-arabino-heptulosonate 7-phosphate (DAHP) to dehydroquinate (DHQ). This Shewanella sediminis (strain HAW-EB3) protein is 3-dehydroquinate synthase.